Reading from the N-terminus, the 203-residue chain is Microtubule-associated protein Jupiter (203 aa).

A Phosphoserine modification is found at serine 30. A phosphothreonine mark is found at threonine 41 and threonine 102. The span at 123–132 (LISKGNYNGK) shows a compositional bias: polar residues. Disordered regions lie at residues 123–163 (LISK…GNPV) and 182–203 (NGGSQVINKNRVPPGGYSSGLW). Residues 133–146 (SGSVSSASSSVSSS) are compositionally biased toward low complexity. A phosphoserine mark is found at serine 135 and serine 146.

Belongs to the MAP Jupiter family.

The protein localises to the nucleus. It is found in the cytoplasm. The protein resides in the cytoskeleton. Its subcellular location is the spindle. In terms of biological role, binds to all microtubule populations. This chain is Microtubule-associated protein Jupiter, found in Drosophila mojavensis (Fruit fly).